We begin with the raw amino-acid sequence, 664 residues long: Glycine--tRNA ligase beta subunit (664 aa).

Belongs to the class-II aminoacyl-tRNA synthetase family. In terms of assembly, tetramer of two alpha and two beta subunits.

It localises to the cytoplasm. The catalysed reaction is tRNA(Gly) + glycine + ATP = glycyl-tRNA(Gly) + AMP + diphosphate. This chain is Glycine--tRNA ligase beta subunit, found in Rickettsia africae (strain ESF-5).